A 190-amino-acid polypeptide reads, in one-letter code: Heme-binding protein 1 (190 aa).

The protein belongs to the HEBP family. Monomer.

It localises to the cytoplasm. May bind free porphyrinogens that may be present in the cell and thus facilitate removal of these potentially toxic compound. Binds with a high affinity to one molecule of heme or porphyrins. It binds metalloporphyrins, free porphyrins and N-methylprotoporphyrin with similar affinities. The protein is Heme-binding protein 1 (hebp1) of Xenopus tropicalis (Western clawed frog).